Here is a 631-residue protein sequence, read N- to C-terminus: Cyclic nucleotide-gated channel alpha-3 (631 aa).

The segment covering 1–18 has biased composition (polar residues); it reads MAKVNTQCSQPSPTQLSI. Disordered stretches follow at residues 1-21 and 71-98; these read MAKVNTQCSQPSPTQLSIKNA and EVSTRESNAQPNPGEQKPPDGGEGRKEE. Over 1 to 111 the chain is Cytoplasmic; sequence MAKVNTQCSQ…VDPSSNIYYR (111 aa). Basic and acidic residues predominate over residues 87–98; it reads KPPDGGEGRKEE. A helical transmembrane segment spans residues 112–133; sequence WLTAIALPVFYNWCLLVCRACF. At 134-139 the chain is on the extracellular side; sequence DELQSE. A helical transmembrane segment spans residues 140–160; it reads HLTLWLVLDYSADVLYVLDML. Residues 161 to 187 are Cytoplasmic-facing; that stretch reads VRARTGFLEQGLMVRDTKRLWKHYTKT. The helical transmembrane segment at 188-207 threads the bilayer; that stretch reads LHFKLDILSLIPTDLAYLKL. The Extracellular portion of the chain corresponds to 208 to 211; sequence GVNY. Residues 212-229 traverse the membrane as a helical segment; sequence PELRFNRLLKFSRLFEFF. Residues 230-239 lie on the Cytoplasmic side of the membrane; it reads DRTETRTNYP. The interval 239–347 is ion conduction pathway; sequence PNVFRIGNLV…GNVGSMISNM (109 aa). Residues 240–262 traverse the membrane as a helical segment; the sequence is NVFRIGNLVLYTLIIIHWNACIY. The Extracellular portion of the chain corresponds to 263-288; that stretch reads FAISKFIGFGTDSWVYPNTSKPEYAR. Asn280 is a glycosylation site (N-linked (GalNAc...) asparagine). Transmembrane regions (helical) follow at residues 289-319 and 320-344; these read LSRKYIYSLYWSTLTLTTIGETPPPVKDEEY and LFVVIDFLVGILIFATIVGNVGSMI. Positions 306–309 are selectivity filter; sequence TIGE. At 345-631 the chain is on the cytoplasmic side; that stretch reads SNMNAPRVEF…ENSEDASKTD (287 aa). Residues 349–426 are C-linker; the sequence is APRVEFQAKI…TLKKVRIFQD (78 aa). Positions 429–549 are cyclic nucleotide-binding domain; that stretch reads AGLLVELVLK…EEKGRQILMK (121 aa). Gly489, Glu490, Ser492, Arg505, Thr506, and Asp550 together coordinate 3',5'-cyclic GMP. Residues 567–610 adopt a coiled-coil conformation; the sequence is VEEKVEYLESSLDILQTRFARLLAEYSASQMKLKQRLTRLESQM.

Belongs to the cyclic nucleotide-gated cation channel (TC 1.A.1.5) family. CNGA3 subfamily. As to quaternary structure, forms heterotetrameric channels composed of CNGA3 and CNGB3 subunits with 3:1 stoichiometry. As to expression, prominently expressed in retina.

Its subcellular location is the cell membrane. It catalyses the reaction Ca(2+)(in) = Ca(2+)(out). The enzyme catalyses Na(+)(in) = Na(+)(out). The catalysed reaction is K(+)(in) = K(+)(out). It carries out the reaction NH4(+)(in) = NH4(+)(out). It catalyses the reaction Rb(+)(in) = Rb(+)(out). The enzyme catalyses Li(+)(in) = Li(+)(out). The catalysed reaction is Cs(+)(in) = Cs(+)(out). Its function is as follows. Pore-forming subunit of the cone cyclic nucleotide-gated channel. Mediates cone photoresponses at bright light converting transient changes in intracellular cGMP levels into electrical signals. In the dark, cGMP levels are high and keep the channel open enabling a steady inward current carried by Na(+) and Ca(2+) ions that leads to membrane depolarization and neurotransmitter release from synaptic terminals. Upon photon absorption cGMP levels decline leading to channel closure and membrane hyperpolarization that ultimately slows neurotransmitter release and signals the presence of light, the end point of the phototransduction cascade. Pore-forming subunit of the gustatory cyclic nucleotide-gated channel. In the taste buds, may sense oral extracellular pH and conduct ion currents that modulate the excitability of taste cells. Conducts cGMP- and cAMP-gated ion currents, with permeability for monovalent and divalent cations. This Mus musculus (Mouse) protein is Cyclic nucleotide-gated channel alpha-3.